A 388-amino-acid chain; its full sequence is S-adenosylmethionine synthase (388 aa).

His16 is a binding site for ATP. Asp18 contacts Mg(2+). Glu44 provides a ligand contact to K(+). The L-methionine site is built by Glu57 and Gln100. The segment at 100–110 (QSPEIAQGVDR) is flexible loop. ATP contacts are provided by residues 165–167 (DAK), Asp240, 246–247 (RK), Ala263, and Lys267. Asp240 contributes to the L-methionine binding site. Lys271 lines the L-methionine pocket.

Belongs to the AdoMet synthase family. As to quaternary structure, homotetramer; dimer of dimers. Requires Mg(2+) as cofactor. It depends on K(+) as a cofactor.

Its subcellular location is the cytoplasm. It carries out the reaction L-methionine + ATP + H2O = S-adenosyl-L-methionine + phosphate + diphosphate. It participates in amino-acid biosynthesis; S-adenosyl-L-methionine biosynthesis; S-adenosyl-L-methionine from L-methionine: step 1/1. Functionally, catalyzes the formation of S-adenosylmethionine (AdoMet) from methionine and ATP. The overall synthetic reaction is composed of two sequential steps, AdoMet formation and the subsequent tripolyphosphate hydrolysis which occurs prior to release of AdoMet from the enzyme. The sequence is that of S-adenosylmethionine synthase from Acinetobacter baumannii (strain ACICU).